The following is a 546-amino-acid chain: Oncoprotein-induced transcript 3 protein (546 aa).

The N-terminal stretch at 1 to 19 (MPLSLLLTCLSTTVTLVSP) is a signal peptide. Asparagine 89 and asparagine 116 each carry an N-linked (GlcNAc...) asparagine glycan. The EGF-like; calcium-binding domain maps to 182–222 (DENECEHNNGGCSEICVNLKNSHRCACGVGRVLRSDGKTCE). 3 disulfide bridges follow: cysteine 186–cysteine 197, cysteine 193–cysteine 206, and cysteine 208–cysteine 221. In terms of domain architecture, ZP spans 261–516 (TCQVPVLCKS…SRCAQGCHRR (256 aa)). N-linked (GlcNAc...) asparagine glycosylation occurs at asparagine 299.

Liver-specific. Expressed only in the hepatocytes.

It is found in the nucleus envelope. May be involved in hepatocellular function and development. The sequence is that of Oncoprotein-induced transcript 3 protein (Oit3) from Mus musculus (Mouse).